The sequence spans 173 residues: Small ribosomal subunit protein uS5 (173 aa).

The S5 DRBM domain maps to 17–80 (WQERVIQIRR…ADGKKQLIEV (64 aa)).

Belongs to the universal ribosomal protein uS5 family. Part of the 30S ribosomal subunit. Contacts proteins S4 and S8.

In terms of biological role, with S4 and S12 plays an important role in translational accuracy. Its function is as follows. Located at the back of the 30S subunit body where it stabilizes the conformation of the head with respect to the body. The chain is Small ribosomal subunit protein uS5 from Microcystis aeruginosa (strain NIES-843 / IAM M-2473).